Consider the following 176-residue polypeptide: Prepronociceptin (176 aa).

A signal peptide spans 1–19; it reads MKVLLCDLLLLSLFSSVFS. Propeptides lie at residues 20–95 and 169–176; these read SCQR…MQHL and TLHQNGNV.

It belongs to the opioid neuropeptide precursor family. Specific enzymatic cleavages at paired basic residues probably yield other active peptides besides nociceptin. Post-translationally, the N-terminal domain contains 6 conserved cysteines thought to be involved in disulfide bonding and/or processing. As to expression, predominantly expressed in the brain and spinal cord. Also expressed and secreted by peripheral blood neutrophils following degranulation.

The protein resides in the secreted. Ligand of the opioid receptor-like receptor OPRL1. It may act as a transmitter in the brain by modulating nociceptive and locomotor behavior. May be involved in neuronal differentiation and development. Functionally, blocks nociceptin action in pain transmission by inhibiting nociceptin-induced hyperalgesia and allodynia. In terms of biological role, has potent analgesic activity. In Homo sapiens (Human), this protein is Prepronociceptin (PNOC).